Consider the following 148-residue polypeptide: Cystatin-C (148 aa).

The signal sequence occupies residues 1 to 30 (MVGSPRAPLLLLASLIVALALALAVSPAAA). Residue Gln31 is modified to Pyrrolidone carboxylic acid. The Secondary area of contact motif lies at 84-88 (QVVSG). Intrachain disulfides connect Cys102–Cys112 and Cys126–Cys146.

It is found in the secreted. Functionally, this is a thiol proteinase inhibitor. In Bos taurus (Bovine), this protein is Cystatin-C (CST3).